The following is a 351-amino-acid chain: UDP-3-O-acylglucosamine N-acyltransferase (351 aa).

The Proton acceptor role is filled by H257.

Belongs to the transferase hexapeptide repeat family. LpxD subfamily. In terms of assembly, homotrimer.

The enzyme catalyses a UDP-3-O-[(3R)-3-hydroxyacyl]-alpha-D-glucosamine + a (3R)-hydroxyacyl-[ACP] = a UDP-2-N,3-O-bis[(3R)-3-hydroxyacyl]-alpha-D-glucosamine + holo-[ACP] + H(+). It functions in the pathway bacterial outer membrane biogenesis; LPS lipid A biosynthesis. In terms of biological role, catalyzes the N-acylation of UDP-3-O-acylglucosamine using 3-hydroxyacyl-ACP as the acyl donor. Is involved in the biosynthesis of lipid A, a phosphorylated glycolipid that anchors the lipopolysaccharide to the outer membrane of the cell. The sequence is that of UDP-3-O-acylglucosamine N-acyltransferase from Brucella abortus (strain S19).